The following is a 104-amino-acid chain: Biogenesis of lysosome-related organelles complex 1 subunit BLS1 (104 aa).

Belongs to the BLOC1S1 family. As to quaternary structure, component of the biogenesis of lysosome-related organelles complex-1 (BLOC-1).

The protein localises to the endosome. Its function is as follows. Component of the biogenesis of lysosome-related organelles complex-1 (BLOC-1), a complex involved in endosomal cargo sorting. This is Biogenesis of lysosome-related organelles complex 1 subunit BLS1 (BLS1) from Kluyveromyces lactis (strain ATCC 8585 / CBS 2359 / DSM 70799 / NBRC 1267 / NRRL Y-1140 / WM37) (Yeast).